The chain runs to 179 residues: uncharacterized protein (179 aa).

This is an uncharacterized protein from Escherichia coli (strain K12).